A 234-amino-acid chain; its full sequence is Sugar fermentation stimulation protein homolog (234 aa).

Belongs to the SfsA family.

The chain is Sugar fermentation stimulation protein homolog from Pseudoalteromonas atlantica (strain T6c / ATCC BAA-1087).